We begin with the raw amino-acid sequence, 608 residues long: Elongation factor 4 (608 aa).

The region spanning 11–193 (KKIRNFSIIA…QIVEKVPEPS (183 aa)) is the tr-type G domain. Residues 23–28 (DHGKST) and 140–143 (NKID) each bind GTP.

It belongs to the TRAFAC class translation factor GTPase superfamily. Classic translation factor GTPase family. LepA subfamily.

The protein localises to the cell membrane. The catalysed reaction is GTP + H2O = GDP + phosphate + H(+). In terms of biological role, required for accurate and efficient protein synthesis under certain stress conditions. May act as a fidelity factor of the translation reaction, by catalyzing a one-codon backward translocation of tRNAs on improperly translocated ribosomes. Back-translocation proceeds from a post-translocation (POST) complex to a pre-translocation (PRE) complex, thus giving elongation factor G a second chance to translocate the tRNAs correctly. Binds to ribosomes in a GTP-dependent manner. The chain is Elongation factor 4 from Listeria monocytogenes serotype 4b (strain CLIP80459).